Here is a 249-residue protein sequence, read N- to C-terminus: Phosphatidylglycerol--prolipoprotein diacylglyceryl transferase (249 aa).

Helical transmembrane passes span 11-31, 49-69, 82-102, 116-136, 163-183, 192-212, and 223-243; these read LKIY…VILL, AIVG…IVDI, LGNG…VYLY, LVVP…FLAG, LHPT…FLLW, GRVF…VEFL, and LSTS…VFNI. Position 129 (R129) interacts with a 1,2-diacyl-sn-glycero-3-phospho-(1'-sn-glycerol).

Belongs to the Lgt family.

Its subcellular location is the cell membrane. The enzyme catalyses L-cysteinyl-[prolipoprotein] + a 1,2-diacyl-sn-glycero-3-phospho-(1'-sn-glycerol) = an S-1,2-diacyl-sn-glyceryl-L-cysteinyl-[prolipoprotein] + sn-glycerol 1-phosphate + H(+). The protein operates within protein modification; lipoprotein biosynthesis (diacylglyceryl transfer). Catalyzes the transfer of the diacylglyceryl group from phosphatidylglycerol to the sulfhydryl group of the N-terminal cysteine of a prolipoprotein, the first step in the formation of mature lipoproteins. This Clostridium tetani (strain Massachusetts / E88) protein is Phosphatidylglycerol--prolipoprotein diacylglyceryl transferase.